We begin with the raw amino-acid sequence, 334 residues long: Ferrochelatase (334 aa).

Fe cation is bound by residues H207 and E288.

The protein belongs to the ferrochelatase family.

It localises to the cytoplasm. It catalyses the reaction heme b + 2 H(+) = protoporphyrin IX + Fe(2+). The protein operates within porphyrin-containing compound metabolism; protoheme biosynthesis; protoheme from protoporphyrin-IX: step 1/1. Functionally, catalyzes the ferrous insertion into protoporphyrin IX. The sequence is that of Ferrochelatase from Helicobacter pylori (strain ATCC 700392 / 26695) (Campylobacter pylori).